Reading from the N-terminus, the 531-residue chain is Pescadillo homolog (531 aa).

The BRCT domain maps to 309–398; it reads SIKTMFKGCV…RKLPTERYMP (90 aa).

This sequence belongs to the pescadillo family.

It is found in the nucleus. It localises to the nucleolus. The protein localises to the nucleoplasm. Functionally, required for maturation of ribosomal RNAs and formation of the large ribosomal subunit. This chain is Pescadillo homolog, found in Caenorhabditis elegans.